Here is a 134-residue protein sequence, read N- to C-terminus: D-ribose pyranase (134 aa).

His-20 functions as the Proton donor in the catalytic mechanism. Substrate contacts are provided by residues Asp-28, His-99, and 123 to 125 (YSN).

This sequence belongs to the RbsD / FucU family. RbsD subfamily. In terms of assembly, homodecamer.

The protein resides in the cytoplasm. It catalyses the reaction beta-D-ribopyranose = beta-D-ribofuranose. It participates in carbohydrate metabolism; D-ribose degradation; D-ribose 5-phosphate from beta-D-ribopyranose: step 1/2. Catalyzes the interconversion of beta-pyran and beta-furan forms of D-ribose. The sequence is that of D-ribose pyranase from Staphylococcus aureus (strain Mu3 / ATCC 700698).